The following is a 370-amino-acid chain: Quinolinate synthase (370 aa).

2 residues coordinate iminosuccinate: H62 and S83. Position 128 (C128) interacts with [4Fe-4S] cluster. Residues 154–156 and S171 each bind iminosuccinate; that span reads YAN. A [4Fe-4S] cluster-binding site is contributed by C215. Iminosuccinate-binding positions include 241–243 and T258; that span reads HPE. [4Fe-4S] cluster is bound at residue C312.

It belongs to the quinolinate synthase family. Type 1 subfamily. The cofactor is [4Fe-4S] cluster.

It is found in the cytoplasm. The enzyme catalyses iminosuccinate + dihydroxyacetone phosphate = quinolinate + phosphate + 2 H2O + H(+). Its pathway is cofactor biosynthesis; NAD(+) biosynthesis; quinolinate from iminoaspartate: step 1/1. Functionally, catalyzes the condensation of iminoaspartate with dihydroxyacetone phosphate to form quinolinate. The chain is Quinolinate synthase from Neisseria meningitidis serogroup C / serotype 2a (strain ATCC 700532 / DSM 15464 / FAM18).